A 314-amino-acid polypeptide reads, in one-letter code: Glycine--tRNA ligase alpha subunit (314 aa).

It belongs to the class-II aminoacyl-tRNA synthetase family. Tetramer of two alpha and two beta subunits.

It is found in the cytoplasm. It carries out the reaction tRNA(Gly) + glycine + ATP = glycyl-tRNA(Gly) + AMP + diphosphate. This chain is Glycine--tRNA ligase alpha subunit, found in Mesorhizobium japonicum (strain LMG 29417 / CECT 9101 / MAFF 303099) (Mesorhizobium loti (strain MAFF 303099)).